A 201-amino-acid polypeptide reads, in one-letter code: Small ribosomal subunit protein uS4c (201 aa).

Positions Ala-17–Phe-36 are disordered. The 69-residue stretch at Met-89 to Pro-157 folds into the S4 RNA-binding domain.

The protein belongs to the universal ribosomal protein uS4 family. As to quaternary structure, part of the 30S ribosomal subunit. Contacts protein S5. The interaction surface between S4 and S5 is involved in control of translational fidelity.

The protein localises to the plastid. The protein resides in the chloroplast. One of the primary rRNA binding proteins, it binds directly to 16S rRNA where it nucleates assembly of the body of the 30S subunit. Its function is as follows. With S5 and S12 plays an important role in translational accuracy. The polypeptide is Small ribosomal subunit protein uS4c (rps4) (Agrostis stolonifera (Creeping bentgrass)).